Here is a 462-residue protein sequence, read N- to C-terminus: Probable alcohol acetyltransferase crmB (462 aa).

The protein belongs to the alcohol acetyltransferase FCK4 family.

The protein operates within secondary metabolite biosynthesis. Its function is as follows. Probable alcohol acetyltransferase; part of the crm gene cluster that mediates the biosynthesis of a yet unidentified copper-responsive metabolite. In contrast to crmA, is not involved in the biosynthesis of fumivalines or fumicicolins. This Aspergillus fumigatus (strain ATCC MYA-4609 / CBS 101355 / FGSC A1100 / Af293) (Neosartorya fumigata) protein is Probable alcohol acetyltransferase crmB.